Here is a 116-residue protein sequence, read N- to C-terminus: Large ribosomal subunit protein bL17 (116 aa).

This sequence belongs to the bacterial ribosomal protein bL17 family. In terms of assembly, part of the 50S ribosomal subunit. Contacts protein L32.

The polypeptide is Large ribosomal subunit protein bL17 (Synechococcus sp. (strain WH7803)).